We begin with the raw amino-acid sequence, 828 residues long: Auxin response factor 2B (828 aa).

The TF-B3 DNA-binding region spans 128-230 (FCKTLTASDT…ELRVGVRRAM (103 aa)). 3 disordered regions span residues 348–397 (PDRV…GSSK), 681–703 (EQFQ…HSTR), and 791–828 (NPGT…PEDS). Over residues 360 to 370 (LSPPALNPLPI) the composition is skewed to pro residues. Polar residues predominate over residues 380–390 (VLPSSPDSSVL). Residues 703 to 786 (RSCTKVHKQG…RKIFIYTKDE (84 aa)) enclose the PB1 domain. A compositionally biased stretch (polar residues) spans 791-806 (NPGTLNSKGEDNSSVA).

Belongs to the ARF family. As to quaternary structure, homodimers and heterodimers. In terms of tissue distribution, expressed in root, leaf and stem. Also expressed in flower and fruit. Expressed in flower buds about three days before opening including stamen, petal and sepal with the highest in ovary.

Its subcellular location is the nucleus. Its function is as follows. Auxin response factors (ARFs) are transcriptional factors that binds specifically to the DNA sequence 5'-TGTCTC-3' found in the auxin-responsive promoter elements (AuxREs). Could act as transcriptional activator or repressor. Involved in the control of fruit ripening process. Regulates expression of a number of ripening regulators, transcription factors, and ethylene biosynthesis and signaling components. May act as a transcriptional repressor of auxin-responsive genes. This is Auxin response factor 2B from Solanum lycopersicum (Tomato).